The chain runs to 79 residues: UPF0401 protein YkfF (79 aa).

Belongs to the UPF0401 family.

In Escherichia coli (strain K12), this protein is UPF0401 protein YkfF (ykfF).